Here is a 164-residue protein sequence, read N- to C-terminus: Urease subunit beta (164 aa).

Polar residues-rich tracts occupy residues 1-10 and 20-30; these read MSTKTNSTKA and TNRGTKSSAGY. The tract at residues 1-30 is disordered; that stretch reads MSTKTNSTKATSEKTDSLKTNRGTKSSAGY.

It belongs to the urease beta subunit family. In terms of assembly, heterotrimer of UreA (gamma), UreB (beta) and UreC (alpha) subunits. Three heterotrimers associate to form the active enzyme.

Its subcellular location is the cytoplasm. The catalysed reaction is urea + 2 H2O + H(+) = hydrogencarbonate + 2 NH4(+). The protein operates within nitrogen metabolism; urea degradation; CO(2) and NH(3) from urea (urease route): step 1/1. Its function is as follows. Expression of the urease operon increases the likelihood of bacterial survival by contributing to acid resistance in vitro and in vivo in BALB/c mice. Y.enterocolitica enters the body via an oral path and must survive the acidic stomach before being able to colonize the intestinal mucosa. This Yersinia enterocolitica protein is Urease subunit beta.